A 405-amino-acid polypeptide reads, in one-letter code: CMP-sialic acid transporter 3 (405 aa).

Over 1–39 (MKNGIAECPACHSKLVSPGSKTISRAYDDHKIRVSSKQR) the chain is Cytoplasmic. A helical membrane pass occupies residues 40–60 (VLNVLLVVGDCMLVGLQPVLV). The Lumenal segment spans residues 61-73 (YMSKVDGKFNFSP). Residues 74–94 (ISVNFLTEIAKVIFAIVMLLI) form a helical membrane-spanning segment. The Cytoplasmic segment spans residues 95–142 (QARHQKVGEKPLLSVSTFVQAARNNVLLAVPALLYAINNYLKFTMQLY). A helical membrane pass occupies residues 143–163 (FNPATVKMLSNLKVLVIAVLL). Over 164-170 (KMVMKRR) the chain is Lumenal. The chain crosses the membrane as a helical span at residues 171–191 (FSIIQWEALALLLIGISVNQL). Topologically, residues 192-199 (RSLPEGAT) are cytoplasmic. The chain crosses the membrane as a helical span at residues 200–220 (AIGIPLATGAYVCTVIFVTVP). The Lumenal segment spans residues 221–243 (SMASVFNEYALKSQYDTSIYLQN). The helical transmembrane segment at 244 to 264 (LFLYGYGAIFNFLGILGTVIY) threads the bilayer. The Cytoplasmic segment spans residues 265 to 280 (KGPGSFDILQGHSRAT). A helical membrane pass occupies residues 281 to 301 (MFLILNNAAQGILSSFFFKYA). Residues 302 to 321 (DTILKKYSSTVATIFTGIAS) lie on the Lumenal side of the membrane. The helical transmembrane segment at 322 to 342 (AALFGHVITMNFLLGISIVFI) threads the bilayer. Residues 343–405 (SMHQFFSPLA…SDDRTPLLPR (63 aa)) lie on the Cytoplasmic side of the membrane. The tract at residues 385 to 405 (GANEEASHRGESDDRTPLLPR) is disordered. Residues 389–405 (EASHRGESDDRTPLLPR) show a composition bias toward basic and acidic residues.

Belongs to the nucleotide-sugar transporter family. CMP-Sialate:CMP antiporter (TC 2.A.7.12) subfamily.

It localises to the golgi apparatus membrane. Sugar transporter involved in the transport of CMP-sialic acid from the cytoplasm into the Golgi. This Arabidopsis thaliana (Mouse-ear cress) protein is CMP-sialic acid transporter 3 (UTR6).